The chain runs to 117 residues: MDKKQARLRRARKTRARIAELKMARLSVHRTNCHIYAQIIDETGSRVLAQASTLEAEVKKELANGGNAGAAALIGKRIAEKAKAAGVEKVAFDRSGFQYHGRIKALADAARENGLAF.

The protein belongs to the universal ribosomal protein uL18 family. In terms of assembly, part of the 50S ribosomal subunit; part of the 5S rRNA/L5/L18/L25 subcomplex. Contacts the 5S and 23S rRNAs.

Its function is as follows. This is one of the proteins that bind and probably mediate the attachment of the 5S RNA into the large ribosomal subunit, where it forms part of the central protuberance. This chain is Large ribosomal subunit protein uL18, found in Laribacter hongkongensis (strain HLHK9).